A 144-amino-acid polypeptide reads, in one-letter code: uncharacterized protein (144 aa).

2 helical membrane passes run 76 to 96 (LLSA…VTML) and 105 to 125 (ILRA…VKSY).

This sequence belongs to the RseC family.

Its subcellular location is the cell inner membrane. This is an uncharacterized protein from Haemophilus influenzae (strain ATCC 51907 / DSM 11121 / KW20 / Rd).